Consider the following 632-residue polypeptide: Lipoma-preferred partner homolog (632 aa).

Disordered regions lie at residues 1 to 118 (MSHP…RSSL) and 135 to 249 (SSPY…RSYN). A compositionally biased stretch (polar residues) spans 26 to 40 (THSFGTPSISVSTQQ). Low complexity predominate over residues 41-53 (PPKKFAPVVAPKP). N6-acetyllysine is present on lysine 109. Serine 117 and serine 152 each carry phosphoserine. A compositionally biased stretch (low complexity) spans 144–160 (PGSSSSIASPPVSTPVT). Composition is skewed to polar residues over residues 172–182 (PLTATKKSATK) and 206–239 (SYST…SSGQ). At tyrosine 241 the chain carries Phosphotyrosine. At arginine 246 the chain carries Omega-N-methylarginine. A Glycyl lysine isopeptide (Lys-Gly) (interchain with G-Cter in SUMO1) cross-link involves residue lysine 324. LIM zinc-binding domains follow at residues 434–493 (GRCA…INTL), 494–554 (EQCS…KFAP), and 555–623 (RCSV…RIRV).

The protein belongs to the zyxin/ajuba family. As to quaternary structure, interacts with PDZ domains of SCRIB, with VASP and with ACTN1/alpha-actinin.

Its subcellular location is the nucleus. It is found in the cytoplasm. The protein resides in the cell junction. Its function is as follows. May play a structural role at sites of cell adhesion in maintaining cell shape and motility. In addition to these structural functions, it may also be implicated in signaling events and activation of gene transcription. May be involved in signal transduction from cell adhesion sites to the nucleus allowing successful integration of signals arising from soluble factors and cell-cell adhesion. Also suggested to serve as a scaffold protein upon which distinct protein complexes are assembled in the cytoplasm and in the nucleus. This Rattus norvegicus (Rat) protein is Lipoma-preferred partner homolog (Lpp).